Consider the following 170-residue polypeptide: Bacilliredoxin SRU_1493 (170 aa).

Residues 140-170 form a disordered region; it reads CGDEEPPADAPSRPDPSSSGEGLPSTFQSIT.

Belongs to the bacilliredoxin family.

This is Bacilliredoxin SRU_1493 from Salinibacter ruber (strain DSM 13855 / M31).